The chain runs to 195 residues: Imidazoleglycerol-phosphate dehydratase (195 aa).

Belongs to the imidazoleglycerol-phosphate dehydratase family.

It localises to the cytoplasm. The catalysed reaction is D-erythro-1-(imidazol-4-yl)glycerol 3-phosphate = 3-(imidazol-4-yl)-2-oxopropyl phosphate + H2O. The protein operates within amino-acid biosynthesis; L-histidine biosynthesis; L-histidine from 5-phospho-alpha-D-ribose 1-diphosphate: step 6/9. The polypeptide is Imidazoleglycerol-phosphate dehydratase (Burkholderia mallei (strain NCTC 10247)).